A 782-amino-acid chain; its full sequence is E3 UFM1-protein ligase 1 homolog (782 aa).

A disordered region spans residues 404–477 (NASTQELEDD…GSRGGGGVNK (74 aa)). Basic residues predominate over residues 443–453 (KSTKKHQRGKA).

This sequence belongs to the UFL1 family.

E3 UFM1-protein ligase that mediates ufmylation of target proteins. This is E3 UFM1-protein ligase 1 homolog from Drosophila erecta (Fruit fly).